Here is a 319-residue protein sequence, read N- to C-terminus: HPr kinase/phosphorylase (319 aa).

Active-site residues include histidine 141 and lysine 162. Residue 156-163 (GNSGVGKS) coordinates ATP. Position 163 (serine 163) interacts with Mg(2+). Catalysis depends on aspartate 180, which acts as the Proton acceptor; for phosphorylation activity. Proton donor; for dephosphorylation activity. Positions 204-213 (MEIRGIGIID) are important for the catalytic mechanism of both phosphorylation and dephosphorylation. Glutamate 205 is a Mg(2+) binding site. Arginine 246 is an active-site residue. An important for the catalytic mechanism of dephosphorylation region spans residues 267-272 (PVKVGR).

Belongs to the HPrK/P family. In terms of assembly, homohexamer. The cofactor is Mg(2+).

The enzyme catalyses [HPr protein]-L-serine + ATP = [HPr protein]-O-phospho-L-serine + ADP + H(+). It catalyses the reaction [HPr protein]-O-phospho-L-serine + phosphate + H(+) = [HPr protein]-L-serine + diphosphate. Functionally, catalyzes the ATP- as well as the pyrophosphate-dependent phosphorylation of a specific serine residue in HPr, a phosphocarrier protein of the phosphoenolpyruvate-dependent sugar phosphotransferase system (PTS). HprK/P also catalyzes the pyrophosphate-producing, inorganic phosphate-dependent dephosphorylation (phosphorolysis) of seryl-phosphorylated HPr (P-Ser-HPr). The two antagonistic activities of HprK/P are regulated by several intracellular metabolites, which change their concentration in response to the absence or presence of rapidly metabolisable carbon sources (glucose, fructose, etc.) in the growth medium. Therefore, by controlling the phosphorylation state of HPr, HPrK/P is a sensor enzyme that plays a major role in the regulation of carbon metabolism and sugar transport: it mediates carbon catabolite repression (CCR), and regulates PTS-catalyzed carbohydrate uptake and inducer exclusion. This is HPr kinase/phosphorylase from Lactobacillus johnsonii (strain CNCM I-12250 / La1 / NCC 533).